The chain runs to 271 residues: Neurexophilin-1 (271 aa).

The first 21 residues, 1–21 (MQAACWYVLLLLQPTVYLVTC), serve as a signal peptide directing secretion. Residues 22-97 (ANLTNGGKSE…WDWLRNSTDL (76 aa)) are II. Residues asparagine 23, asparagine 68, asparagine 93, asparagine 146, asparagine 156, and asparagine 162 are each glycosylated (N-linked (GlcNAc...) asparagine). Residues 98-176 (QEPRPRAKRR…LVPPTKIVEF (79 aa)) are III. The segment at 177-185 (DLAQQTVID) is IV (linker domain). Residues 186–271 (AKDSKSFNCR…HSDTPYFPSG (86 aa)) form a v (Cys-rich) region.

It belongs to the neurexophilin family. May be proteolytically processed at the boundary between the N-terminal non-conserved and the central conserved domain in neuron-like cells. Highest level in brain.

It localises to the secreted. Its function is as follows. May be signaling molecules that resemble neuropeptides. Ligand for alpha-neurexins. The sequence is that of Neurexophilin-1 (Nxph1) from Rattus norvegicus (Rat).